A 258-amino-acid polypeptide reads, in one-letter code: Indole-3-glycerol phosphate synthase (258 aa).

This sequence belongs to the TrpC family.

The enzyme catalyses 1-(2-carboxyphenylamino)-1-deoxy-D-ribulose 5-phosphate + H(+) = (1S,2R)-1-C-(indol-3-yl)glycerol 3-phosphate + CO2 + H2O. Its pathway is amino-acid biosynthesis; L-tryptophan biosynthesis; L-tryptophan from chorismate: step 4/5. The polypeptide is Indole-3-glycerol phosphate synthase (Endomicrobium trichonymphae).